The following is a 287-amino-acid chain: D-apionate oxidoisomerase (287 aa).

NAD(+)-binding positions include 13 to 15 (GKM), Glu36, and Asp71. Zn(2+) is bound by residues His116 and Glu186.

It belongs to the ApnO family. Zn(2+) is required as a cofactor.

The catalysed reaction is D-apionate + NAD(+) = 3-oxoisoapionate + NADH + H(+). It participates in carbohydrate metabolism. Functionally, involved in catabolism of D-apiose. Catalyzes the conversion of D-apionate to 3-oxo-isoapionate. The protein is D-apionate oxidoisomerase of Blautia hydrogenotrophica (strain DSM 10507 / JCM 14656 / S5a33) (Ruminococcus hydrogenotrophicus).